The chain runs to 361 residues: Phosphate acyltransferase (361 aa).

It belongs to the PlsX family. As to quaternary structure, homodimer. Probably interacts with PlsY.

The protein resides in the cytoplasm. The catalysed reaction is a fatty acyl-[ACP] + phosphate = an acyl phosphate + holo-[ACP]. Its pathway is lipid metabolism; phospholipid metabolism. Functionally, catalyzes the reversible formation of acyl-phosphate (acyl-PO(4)) from acyl-[acyl-carrier-protein] (acyl-ACP). This enzyme utilizes acyl-ACP as fatty acyl donor, but not acyl-CoA. This is Phosphate acyltransferase from Parvibaculum lavamentivorans (strain DS-1 / DSM 13023 / NCIMB 13966).